Consider the following 231-residue polypeptide: Ureidoacrylate amidohydrolase RutB (231 aa).

The active-site Proton acceptor is the Asp25. Residue Lys134 is part of the active site. Cys167 acts as the Nucleophile in catalysis.

Belongs to the isochorismatase family. RutB subfamily.

It carries out the reaction (Z)-3-ureidoacrylate + H2O + H(+) = (Z)-3-aminoacrylate + NH4(+) + CO2. It catalyses the reaction (Z)-3-ureidoacrylate + H2O = (Z)-3-aminoacrylate + carbamate + H(+). The enzyme catalyses (Z)-2-methylureidoacrylate + H2O + H(+) = (Z)-2-methylaminoacrylate + NH4(+) + CO2. Hydrolyzes ureidoacrylate to form aminoacrylate and carbamate. The carbamate hydrolyzes spontaneously, thereby releasing one of the nitrogen atoms of the pyrimidine ring as ammonia and one of its carbon atoms as CO2. The polypeptide is Ureidoacrylate amidohydrolase RutB (Escherichia coli (strain SMS-3-5 / SECEC)).